The chain runs to 837 residues: A disintegrin and metalloproteinase with thrombospondin motifs 4 (837 aa).

An N-terminal signal peptide occupies residues 1–51 (MSQTGSHPGRGLAGRWLWGAQPCLLLPIVPLSWLVWLLLLLLASLLPSARL). The propeptide occupies 52 to 212 (ASPLPREEEI…PSPRPRRAKR (161 aa)). The N-linked (GlcNAc...) asparagine glycan is linked to asparagine 68. Residues 192-199 (PMCNVKAP) carry the Cysteine switch motif. A Zn(2+)-binding site is contributed by cysteine 194. The Peptidase M12B domain maps to 218–428 (RFVETLVVAD…GYGHCLLDKP (211 aa)). Disulfide bonds link cysteine 293-cysteine 345, cysteine 322-cysteine 327, cysteine 339-cysteine 423, cysteine 377-cysteine 407, cysteine 449-cysteine 472, cysteine 460-cysteine 482, cysteine 467-cysteine 501, cysteine 495-cysteine 506, cysteine 532-cysteine 569, cysteine 536-cysteine 574, and cysteine 547-cysteine 559. Histidine 361 contacts Zn(2+). Residue glutamate 362 is part of the active site. Positions 365 and 371 each coordinate Zn(2+). Residues 437–519 (TFPGKDYDAD…DQLQDFNIPQ (83 aa)) form the Disintegrin domain. Residues 520–575 (AGGWGPWGPWGDCSRTCGGGVQFSSRDCTRPVPRNGGKYCEGRRTRFRSCNTEDCP) form the TSP type-1 domain. The tract at residues 686-837 (SKQSGSFRKF…LRRRPWAGRK (152 aa)) is spacer.

As to quaternary structure, interacts with SRPX2. Requires Zn(2+) as cofactor. In terms of processing, the precursor is cleaved by a furin endopeptidase. Post-translationally, glycosylated. Can be O-fucosylated by POFUT2 on a serine or a threonine residue found within the consensus sequence C1-X(2)-(S/T)-C2-G of the TSP type-1 repeat domains where C1 and C2 are the first and second cysteine residue of the repeat, respectively. Fucosylated repeats can then be further glycosylated by the addition of a beta-1,3-glucose residue by the glucosyltransferase, B3GALTL. Fucosylation mediates the efficient secretion of ADAMTS family members. Can also be C-glycosylated with one or two mannose molecules on tryptophan residues within the consensus sequence W-X-X-W of the TPRs, and N-glycosylated. These other glycosylations can also facilitate secretion. As to expression, expressed in brain, lung and heart. Expressed at very low level in placenta and skeletal muscles. Isoform 2: Detected in osteoarthritic synovium.

The protein resides in the secreted. Its subcellular location is the extracellular space. It localises to the extracellular matrix. The catalysed reaction is Glutamyl endopeptidase. Bonds cleaved include 370-Thr-Glu-Gly-Glu-|-Ala-Arg-Gly-Ser-377 in the interglobular domain of mammalian aggrecan.. Cleaves aggrecan, a cartilage proteoglycan, at the '392-Glu-|-Ala-393' site and may be involved in its turnover. Also cleaves COMP. May play an important role in the destruction of aggrecan in arthritic diseases. Could be a critical factor in the exacerbation of neurodegeneration in Alzheimer disease. The sequence is that of A disintegrin and metalloproteinase with thrombospondin motifs 4 (ADAMTS4) from Homo sapiens (Human).